The following is a 984-amino-acid chain: Glycine dehydrogenase (decarboxylating) (984 aa).

Lysine 702 is subject to N6-(pyridoxal phosphate)lysine.

The protein belongs to the GcvP family. The glycine cleavage system is composed of four proteins: P, T, L and H. Pyridoxal 5'-phosphate is required as a cofactor.

The catalysed reaction is N(6)-[(R)-lipoyl]-L-lysyl-[glycine-cleavage complex H protein] + glycine + H(+) = N(6)-[(R)-S(8)-aminomethyldihydrolipoyl]-L-lysyl-[glycine-cleavage complex H protein] + CO2. The glycine cleavage system catalyzes the degradation of glycine. The P protein binds the alpha-amino group of glycine through its pyridoxal phosphate cofactor; CO(2) is released and the remaining methylamine moiety is then transferred to the lipoamide cofactor of the H protein. The sequence is that of Glycine dehydrogenase (decarboxylating) from Xanthomonas oryzae pv. oryzae (strain MAFF 311018).